A 1030-amino-acid chain; its full sequence is Probable serine/threonine-protein kinase SIS8 (1030 aa).

2 stretches are compositionally biased toward polar residues: residues 44-58 (PNQSDEAEGSISTTK) and 399-419 (YSASPGDNDSIHVASSSNGIE). Disordered regions lie at residues 44–84 (PNQS…PEIK), 399–474 (YSAS…KAPF), 555–625 (TVES…ASST), and 689–736 (LGSN…SDCD). 3 stretches are compositionally biased toward basic and acidic residues: residues 426-435 (TEFRTGEHRS), 458-471 (ISREDVKNQKKVEK), and 560-580 (NSTEAKKERGKDLETTQEGRH). Residues 613-625 (SQSDSSHSEASST) show a composition bias toward low complexity. Positions 748–1003 (ITVGERIGLG…AEIMASLKRL (256 aa)) constitute a Protein kinase domain. Residues 754–762 (IGLGSYGEV) and Lys775 contribute to the ATP site. The active-site Proton acceptor is the Asp871. Polar residues predominate over residues 1007–1023 (VTGSNIPRPVPSSSSLP). The disordered stretch occupies residues 1007–1030 (VTGSNIPRPVPSSSSLPTEHEQKD).

It belongs to the protein kinase superfamily. Ser/Thr protein kinase family. Interacts with UGT72E1. As to expression, expressed roots, rosette and cauline leaves, and at lower levels in flowers and siliques.

The protein resides in the nucleus. The catalysed reaction is L-seryl-[protein] + ATP = O-phospho-L-seryl-[protein] + ADP + H(+). The enzyme catalyses L-threonyl-[protein] + ATP = O-phospho-L-threonyl-[protein] + ADP + H(+). Its function is as follows. Acts as a negative regulator of salt tolerance. Mediates sugar response during early seedling development. The sequence is that of Probable serine/threonine-protein kinase SIS8 from Arabidopsis thaliana (Mouse-ear cress).